The primary structure comprises 608 residues: DNA mismatch repair protein MutL (608 aa).

The segment at 363-397 (ASLAMARKPDPPRFHETARPQPDPRHTPGTESVSV) is disordered. Over residues 369–390 (RKPDPPRFHETARPQPDPRHTP) the composition is skewed to basic and acidic residues.

The protein belongs to the DNA mismatch repair MutL/HexB family.

In terms of biological role, this protein is involved in the repair of mismatches in DNA. It is required for dam-dependent methyl-directed DNA mismatch repair. May act as a 'molecular matchmaker', a protein that promotes the formation of a stable complex between two or more DNA-binding proteins in an ATP-dependent manner without itself being part of a final effector complex. This chain is DNA mismatch repair protein MutL, found in Pelobacter propionicus (strain DSM 2379 / NBRC 103807 / OttBd1).